The following is a 901-amino-acid chain: Protein translocase subunit SecA (901 aa).

ATP contacts are provided by residues Q85, 103–107 (GEGKT), and D510. Residues 848–901 (RINQNNLPVDENSQTTQNSETEDYSDRRIGRNEPCPCGSGKKYKHCHGSRVARQ) are disordered. Polar residues predominate over residues 849 to 866 (INQNNLPVDENSQTTQNS). Zn(2+) contacts are provided by C882, C884, C893, and H894. A compositionally biased stretch (basic residues) spans 888 to 901 (KKYKHCHGSRVARQ).

It belongs to the SecA family. As to quaternary structure, monomer and homodimer. Part of the essential Sec protein translocation apparatus which comprises SecA, SecYEG and auxiliary proteins SecDF-YajC and YidC. Forms a complex with SecB. It depends on Zn(2+) as a cofactor.

The protein localises to the cell inner membrane. Its subcellular location is the cytoplasm. It catalyses the reaction ATP + H2O + cellular proteinSide 1 = ADP + phosphate + cellular proteinSide 2.. Part of the Sec protein translocase complex. Interacts with the SecYEG preprotein conducting channel. Has a central role in coupling the hydrolysis of ATP to the transfer of proteins into and across the cell membrane, serving both as a receptor for the preprotein-SecB complex and as an ATP-driven molecular motor driving the stepwise translocation of polypeptide chains across the membrane. This Haemophilus influenzae (strain ATCC 51907 / DSM 11121 / KW20 / Rd) protein is Protein translocase subunit SecA.